A 216-amino-acid chain; its full sequence is Somatotropin (216 aa).

The N-terminal stretch at 1 to 26 (MAAGSWTAGLLAFALLCLPWPQEASA) is a signal peptide. His45 is a Zn(2+) binding site. The cysteines at positions 78 and 189 are disulfide-linked. At Ser131 the chain carries Phosphoserine. Position 198 (Glu198) interacts with Zn(2+). Cysteines 206 and 214 form a disulfide.

This sequence belongs to the somatotropin/prolactin family.

It is found in the secreted. Its function is as follows. Plays an important role in growth control. Its major role in stimulating body growth is to stimulate the liver and other tissues to secrete IGF1. It stimulates both the differentiation and proliferation of myoblasts. It also stimulates amino acid uptake and protein synthesis in muscle and other tissues. This is Somatotropin (GH1) from Oryctolagus cuniculus (Rabbit).